We begin with the raw amino-acid sequence, 296 residues long: Cytidine deaminase (296 aa).

2 consecutive CMP/dCMP-type deaminase domains span residues 47–167 (AESE…FGPS) and 186–296 (DSSD…LDPE). 88–90 (NME) lines the substrate pocket. H101 contributes to the Zn(2+) binding site. Catalysis depends on E103, which acts as the Proton donor. Residues C128 and C131 each coordinate Zn(2+).

It belongs to the cytidine and deoxycytidylate deaminase family. In terms of assembly, homodimer. Requires Zn(2+) as cofactor.

It catalyses the reaction cytidine + H2O + H(+) = uridine + NH4(+). The enzyme catalyses 2'-deoxycytidine + H2O + H(+) = 2'-deoxyuridine + NH4(+). Its function is as follows. This enzyme scavenges exogenous and endogenous cytidine and 2'-deoxycytidine for UMP synthesis. The sequence is that of Cytidine deaminase from Shewanella sediminis (strain HAW-EB3).